A 523-amino-acid chain; its full sequence is Nondiscriminating glutamyl-tRNA synthetase EARS2, mitochondrial (523 aa).

The transit peptide at 1-41 (MAALLRRLLQRERPSAASGRPVGRREANLGTDAGVAVRVRF) directs the protein to the mitochondrion. 40-42 (RFA) is an L-glutamate binding site. The 'HIGH' region signature appears at 45–53 (PTGFLHLGG). His50 serves as a coordination point for ATP. L-glutamate contacts are provided by residues Glu76, 228 to 232 (YHLAC), and Arg246. ATP is bound at residue Glu249. Lys256 carries the N6-succinyllysine modification. ATP is bound at residue 284–288 (KLSKR). Residues 284–288 (KLSKR) carry the 'KMSKS' region motif. N6-acetyllysine is present on Lys486.

The protein belongs to the class-I aminoacyl-tRNA synthetase family. Glutamate--tRNA ligase type 1 subfamily.

The protein localises to the mitochondrion matrix. It catalyses the reaction tRNA(Glx) + L-glutamate + ATP = L-glutamyl-tRNA(Glx) + AMP + diphosphate. It carries out the reaction tRNA(Glu) + L-glutamate + ATP = L-glutamyl-tRNA(Glu) + AMP + diphosphate. The enzyme catalyses tRNA(Gln) + L-glutamate + ATP = L-glutamyl-tRNA(Gln) + AMP + diphosphate. Functionally, non-discriminating glutamyl-tRNA synthetase that catalyzes aminoacylation of both mitochondrial tRNA(Glu) and tRNA(Gln) and participates in RNA aminoacylation for mitochondrial protein translation. Attachs glutamate to tRNA(Glu) or tRNA(Gln) in a two-step reaction: glutamate is first activated by ATP to form Glu-AMP and then transferred to the acceptor end of tRNA(Glu) or tRNA(Gln). In vitro, cytoplasmic tRNA(Gln) is slightly glutamylated, but with low activity. The polypeptide is Nondiscriminating glutamyl-tRNA synthetase EARS2, mitochondrial (Homo sapiens (Human)).